The following is a 442-amino-acid chain: D-serine dehydratase (442 aa).

K118 bears the N6-(pyridoxal phosphate)lysine mark.

Belongs to the serine/threonine dehydratase family. DsdA subfamily. Monomer. Requires pyridoxal 5'-phosphate as cofactor.

The catalysed reaction is D-serine = pyruvate + NH4(+). The sequence is that of D-serine dehydratase from Escherichia fergusonii (strain ATCC 35469 / DSM 13698 / CCUG 18766 / IAM 14443 / JCM 21226 / LMG 7866 / NBRC 102419 / NCTC 12128 / CDC 0568-73).